The following is a 504-amino-acid chain: Paired zinc finger protein 1 (504 aa).

C2H2-type zinc fingers lie at residues 12 to 35 (LLCG…RQRH) and 39 to 62 (HMCL…KNKH). The C2H2-type 3; degenerate zinc-finger motif lies at 68-91 (FICVCCNWSFGTEIYLKCHEECMK). Disordered stretches follow at residues 115 to 136 (ALNT…SPVP) and 154 to 173 (IESA…LVSG). The segment covering 159–172 (RSSASTSTPRTLVS) has biased composition (polar residues). 2 consecutive C2H2-type zinc fingers follow at residues 179–202 (IPCG…RRFH) and 206–229 (HTCL…KSQH). The C2H2-type 6; degenerate zinc-finger motif lies at 235–258 (YNCLCCNWTFLNQVHLISHKTCLK). A C2H2-type 7 zinc finger spans residues 309–332 (LSCKSCGKFFYSERSLSKHHRQIH). A C2H2-type 8; degenerate zinc finger spans residues 365-389 (FNCRCCNWSFATRRCLMSHVECLKK).

In terms of tissue distribution, expressed in proximal gonad.

In terms of biological role, possible transcriptional regulator. Involved in promoting segregation of chromosomes during meiosis, perhaps acting downstream of the let-60 RAS / mpk-1 MAPK signaling pathway. The polypeptide is Paired zinc finger protein 1 (Caenorhabditis elegans).